Reading from the N-terminus, the 818-residue chain is MSGWRKIYYKLLNLILKLLVKSKVIPTDPVAELRLDTTRPVFYVLPYNSKVDLLTLRDRCLALDLPDPLDDNEIDGVILPRYVFIDDGPRVFRYYAPKQASVKLFLDYLDLHRGNPSLDIQMIPVSVMFGRAPGREDHKGAPQLRLLNGIQKFFAVLWLGRDSFVRFSNTVSLRYMADEHGTDKTIAQKLARVARMHFSRLRLAAVGPRLPDRQALFNKLLGSKAIEKAVEDEARSKKISREKAQQNAVALMEEIAADFTYEAVRLSDRVLSWTWNRLYQGINVHNAERVRQLAQDGHEIVYVPCHRSHMDYLLLSYVLYHQGLVPPHIAAGINLNFWPAGPIFRRLGAFFIRRTFKGNKLYSTVFREYLGELFSRGYSVEYFMEGGRSRTGRLLEPKTGTLAMTLQAMLRGGKRPITLVPVYIGYEHVMEVATYAKELRGATKEKESLPQMVRGLRKLRNLGQGYVNFGEPISLNVWLNQHVPEWREAIDPIEAQRPHWLPASVNSIAGEVMVNINKAAAANAMNLCATALLASRQRALTREQLLEQLECYLQLLQNVPYAPDATLPQRTPQELLDHALQMNKFEVEKDNIGDLIILPREQAVLMTYYRNNIQHMLVLPALVASMVIHHRQISRDELLRQAAVIYPMLKQELFMHYVPETLPQVLSPIIDELCRQQLISLQDDTLIINPPRIRSLQLLAAGVRETLQRYAITFSLLSANPSISRGALEKESRILAQRLSLLHGINAPEFFDKAVFATLVATLRAEGYINDVGDAVREQTLEIYNLLADLLTPEIRLTIESVSIAALEDTGGADGGTA.

The HXXXXD motif motif lies at 305 to 310 (CHRSHM).

The protein belongs to the GPAT/DAPAT family.

It localises to the cell inner membrane. The catalysed reaction is sn-glycerol 3-phosphate + an acyl-CoA = a 1-acyl-sn-glycero-3-phosphate + CoA. It participates in phospholipid metabolism; CDP-diacylglycerol biosynthesis; CDP-diacylglycerol from sn-glycerol 3-phosphate: step 1/3. In Edwardsiella ictaluri (strain 93-146), this protein is Glycerol-3-phosphate acyltransferase.